The following is a 481-amino-acid chain: Ribulose bisphosphate carboxylase large chain (481 aa).

A propeptide spanning residues 1–2 (MS) is cleaved from the precursor. P3 is modified (N-acetylproline). K14 carries the post-translational modification N6,N6,N6-trimethyllysine. Substrate-binding residues include N123 and T173. K175 functions as the Proton acceptor in the catalytic mechanism. A substrate-binding site is contributed by K177. Mg(2+) is bound by residues K201, D203, and E204. K201 is subject to N6-carboxylysine. The Proton acceptor role is filled by H294. 3 residues coordinate substrate: R295, H327, and S379.

It belongs to the RuBisCO large chain family. Type I subfamily. In terms of assembly, heterohexadecamer of 8 large chains and 8 small chains; disulfide-linked. The disulfide link is formed within the large subunit homodimers. Mg(2+) is required as a cofactor. Post-translationally, the disulfide bond which can form in the large chain dimeric partners within the hexadecamer appears to be associated with oxidative stress and protein turnover.

The protein localises to the plastid. It localises to the chloroplast. The catalysed reaction is 2 (2R)-3-phosphoglycerate + 2 H(+) = D-ribulose 1,5-bisphosphate + CO2 + H2O. It carries out the reaction D-ribulose 1,5-bisphosphate + O2 = 2-phosphoglycolate + (2R)-3-phosphoglycerate + 2 H(+). Functionally, ruBisCO catalyzes two reactions: the carboxylation of D-ribulose 1,5-bisphosphate, the primary event in carbon dioxide fixation, as well as the oxidative fragmentation of the pentose substrate in the photorespiration process. Both reactions occur simultaneously and in competition at the same active site. This chain is Ribulose bisphosphate carboxylase large chain, found in Coffea arabica (Arabian coffee).